We begin with the raw amino-acid sequence, 286 residues long: Bifunctional protein FolD (286 aa).

NADP(+) contacts are provided by residues 165-167 (GRS), serine 190, and valine 231.

It belongs to the tetrahydrofolate dehydrogenase/cyclohydrolase family. In terms of assembly, homodimer.

It catalyses the reaction (6R)-5,10-methylene-5,6,7,8-tetrahydrofolate + NADP(+) = (6R)-5,10-methenyltetrahydrofolate + NADPH. The enzyme catalyses (6R)-5,10-methenyltetrahydrofolate + H2O = (6R)-10-formyltetrahydrofolate + H(+). It functions in the pathway one-carbon metabolism; tetrahydrofolate interconversion. Functionally, catalyzes the oxidation of 5,10-methylenetetrahydrofolate to 5,10-methenyltetrahydrofolate and then the hydrolysis of 5,10-methenyltetrahydrofolate to 10-formyltetrahydrofolate. The polypeptide is Bifunctional protein FolD (Bacillus cereus (strain ATCC 10987 / NRS 248)).